The primary structure comprises 1238 residues: Topoisomerase 1-associated factor 1 (1238 aa).

Residues serine 626 and serine 654 each carry the phosphoserine modification. A disordered region spans residues 1008–1051 (GIARSKKKDKRKRRKGEAKTNLPMFGDQDDERPQTVRERHGVFS). The span at 1010 to 1023 (ARSKKKDKRKRRKG) shows a compositional bias: basic residues. Residues 1038–1050 (ERPQTVRERHGVF) are compositionally biased toward basic and acidic residues. A phosphoserine mark is found at serine 1056 and serine 1058. Residues 1159–1218 (NNNNNQLSDDDVNSESRNSLGSSQPSNSQNMFQSEVYSRKESTKRSLEASAADESDEDEE) are disordered. The span at 1173 to 1194 (ESRNSLGSSQPSNSQNMFQSEV) shows a compositional bias: polar residues. Residues 1195–1205 (YSRKESTKRSL) show a composition bias toward basic and acidic residues. Residues 1209 to 1218 (AADESDEDEE) show a composition bias toward acidic residues. The residue at position 1213 (serine 1213) is a Phosphoserine.

It belongs to the timeless family. In terms of assembly, component of the fork protection complex (FPC) consisting of TOF1 and CSM3. Interacts with WSS1 and ESC4.

It localises to the nucleus. Forms a fork protection complex (FPC) with CSM3 and which is required for chromosome segregation during meiosis and DNA damage repair. FPC coordinates leading and lagging strand synthesis and moves with the replication fork. FPC stabilizes replication forks in a configuration that is recognized by replication checkpoint sensors and protects stalled replication forks against the fork-releasing activity of RRM3 helicase. This chain is Topoisomerase 1-associated factor 1 (TOF1), found in Saccharomyces cerevisiae (strain ATCC 204508 / S288c) (Baker's yeast).